We begin with the raw amino-acid sequence, 152 residues long: B3 domain-containing protein At1g10455 (152 aa).

The TF-B3 DNA-binding region spans 24-131; the sequence is LKKKLSDSDL…EVKFKHFKSQ (108 aa).

It localises to the nucleus. The polypeptide is B3 domain-containing protein At1g10455 (Arabidopsis thaliana (Mouse-ear cress)).